The sequence spans 490 residues: Protein twist (490 aa).

Disordered stretches follow at residues 48 to 72, 96 to 165, and 244 to 264; these read QLQH…QHAQ, PSNE…TGGS, and QQQQ…HAQM. Over residues 54-68 the composition is skewed to basic residues; that stretch reads QHLHSHQHHQQHHQQ. 2 stretches are compositionally biased toward low complexity: residues 102–134 and 244–263; these read STSS…NPSG and QQQQ…SHAQ. A phosphoserine mark is found at Ser-325 and Ser-328. Residues 330–361 form a disordered region; the sequence is LDGSDAGGKAFRKPRRRLKRKPSKTEETDEFS. Over residues 339-351 the composition is skewed to basic residues; the sequence is AFRKPRRRLKRKP. Positions 362–413 constitute a bHLH domain; that stretch reads NQRVMANVRERQRTQSLNDAFKSLQQIIPTLPSDKLSKIQTLKLATRYIDFL.

As to quaternary structure, efficient DNA binding requires dimerization with another bHLH protein. Homodimer. Interacts with akirin. In terms of tissue distribution, expressed in embryonic abdomen; a single cell ventrally, pairs of cells laterally and three cells dorsally in each hemisegment. In the thorax, there are patches of cells associated with the imaginal disks. During larval development, cells proliferate and, in the abdomen, they form ventral, lateral and dorsal clusters, which are the precursors of the adult abdominal muscles. In the thorax, they form populations of cells in the imaginal disks that correspond to the adepithelial cells.

The protein localises to the nucleus. Its function is as follows. Involved in the establishment and dorsoventral patterning of germ layers in the embryo. This chain is Protein twist (twi), found in Drosophila melanogaster (Fruit fly).